The chain runs to 154 residues: Nucleoside diphosphate kinase A1 (154 aa).

ATP is bound by residues K13, F61, R89, T95, R106, and N116. H119 serves as the catalytic Pros-phosphohistidine intermediate.

Belongs to the NDK family. The cofactor is Mg(2+).

The protein localises to the cytoplasm. The catalysed reaction is a 2'-deoxyribonucleoside 5'-diphosphate + ATP = a 2'-deoxyribonucleoside 5'-triphosphate + ADP. It carries out the reaction a ribonucleoside 5'-diphosphate + ATP = a ribonucleoside 5'-triphosphate + ADP. Functionally, major role in the synthesis of nucleoside triphosphates other than ATP. The ATP gamma phosphate is transferred to the NDP beta phosphate via a ping-pong mechanism, using a phosphorylated active-site intermediate. The protein is Nucleoside diphosphate kinase A1 of Xenopus laevis (African clawed frog).